Reading from the N-terminus, the 182-residue chain is Protein GrpE (182 aa).

Residues 1–37 are disordered; sequence MSDSSKERKKKFTGMVNKQKSEDQQNNSKQADDLDEL.

It belongs to the GrpE family. Homodimer.

The protein localises to the cytoplasm. Functionally, participates actively in the response to hyperosmotic and heat shock by preventing the aggregation of stress-denatured proteins, in association with DnaK and GrpE. It is the nucleotide exchange factor for DnaK and may function as a thermosensor. Unfolded proteins bind initially to DnaJ; upon interaction with the DnaJ-bound protein, DnaK hydrolyzes its bound ATP, resulting in the formation of a stable complex. GrpE releases ADP from DnaK; ATP binding to DnaK triggers the release of the substrate protein, thus completing the reaction cycle. Several rounds of ATP-dependent interactions between DnaJ, DnaK and GrpE are required for fully efficient folding. The protein is Protein GrpE of Wolbachia sp. subsp. Brugia malayi (strain TRS).